The primary structure comprises 928 residues: Putative replication origin binding protein (928 aa).

A Helicase ATP-binding domain is found at 386 to 516 (NIVPPKGHIT…QVLRDILMTA (131 aa)). 399–406 (ASLGTGKT) provides a ligand contact to ATP. The DEAD box signature appears at 484-487 (DECD).

The protein belongs to the herpesviridae oribp family.

Its function is as follows. Displays bipolar ssDNA and dsDNA unwinding activities that require the same core catalytic residues for unwinding in either direction, the 3'-5' direction being more robust. The chain is Putative replication origin binding protein from Escherichia coli (Enterobacteria phage T5).